We begin with the raw amino-acid sequence, 108 residues long: Large ribosomal subunit protein uL23 (108 aa).

The protein belongs to the universal ribosomal protein uL23 family. Part of the 50S ribosomal subunit. Contacts protein L29, and trigger factor when it is bound to the ribosome.

Its function is as follows. One of the early assembly proteins it binds 23S rRNA. One of the proteins that surrounds the polypeptide exit tunnel on the outside of the ribosome. Forms the main docking site for trigger factor binding to the ribosome. This is Large ribosomal subunit protein uL23 from Mycoplasmoides gallisepticum (strain R(low / passage 15 / clone 2)) (Mycoplasma gallisepticum).